The chain runs to 266 residues: tRNA (guanine-N(7)-)-methyltransferase (266 aa).

The disordered stretch occupies residues 1 to 32 (MSDHGRMHIPESGLATPAAAHSDDPPHPHFNR). Glu-96, Glu-121, Asp-148, and Asp-171 together coordinate S-adenosyl-L-methionine. The active site involves Asp-171. The substrate site is built by Lys-175 and Asp-207.

It belongs to the class I-like SAM-binding methyltransferase superfamily. TrmB family.

It catalyses the reaction guanosine(46) in tRNA + S-adenosyl-L-methionine = N(7)-methylguanosine(46) in tRNA + S-adenosyl-L-homocysteine. The protein operates within tRNA modification; N(7)-methylguanine-tRNA biosynthesis. Catalyzes the formation of N(7)-methylguanine at position 46 (m7G46) in tRNA. The sequence is that of tRNA (guanine-N(7)-)-methyltransferase from Mycolicibacterium vanbaalenii (strain DSM 7251 / JCM 13017 / BCRC 16820 / KCTC 9966 / NRRL B-24157 / PYR-1) (Mycobacterium vanbaalenii).